A 572-amino-acid chain; its full sequence is MVKTALTAPEGPPSDVEEIKEKSDYLRGTLKEVMLDPISAGIPDDDNRLMKHHGSYLQDDRDLRNERQKQKLEPAYQFMLRVRLPGGIATSKQWLVMDELAHKYGNGTLKLTTRETFQLHGILKWNMKKTIQDIHSTMLDTIAACGDVNRNVMCTSNPYQSEVHHDVYELAKKLSDDLLPQTRAYHEIWLDEEKVAATPDTEVEPMYGPLYLPRKFKIGVAVPPANDIDVFSQDLGFIAIIENEQLIGFNVAIGGGMGMTHGDTATYPQLAKVIGFCTPEQVVEIAKQVITIQRDYGNRSVRKNARFKYTVDRLGLENVKEELEGRLGFALLEARDYHFDHNGDRYGWVKGINGRWHYTMFVEGGRIIDYDDYPLMTGIREIAKIHSGDFRLTANQNLIIGNVTSHKKKQIEQLIQEFGLSDGQQHSALRRSSMACVALPTCGLAMAEAERYLPRLIDKIEEIVEENGLSDKEITIRMTGCPNGCARHALGEIGFIGKSPGKYNMYLGAAFDGSRLSKLYRENVGEEEILNELGSLLPRYAKEREEKEHFGDFVVRAGIVKETTDGTNFHVQ.

4 residues coordinate [4Fe-4S] cluster: Cys-436, Cys-442, Cys-481, and Cys-485. Siroheme is bound at residue Cys-485.

Belongs to the nitrite and sulfite reductase 4Fe-4S domain family. As to quaternary structure, alpha(8)-beta(8). The alpha component is a flavoprotein, the beta component is a hemoprotein. The cofactor is siroheme. Requires [4Fe-4S] cluster as cofactor.

It carries out the reaction hydrogen sulfide + 3 NADP(+) + 3 H2O = sulfite + 3 NADPH + 4 H(+). The protein operates within sulfur metabolism; hydrogen sulfide biosynthesis; hydrogen sulfide from sulfite (NADPH route): step 1/1. Its function is as follows. Component of the sulfite reductase complex that catalyzes the 6-electron reduction of sulfite to sulfide. This is one of several activities required for the biosynthesis of L-cysteine from sulfate. This Bacillus pumilus (strain SAFR-032) protein is Sulfite reductase [NADPH] hemoprotein beta-component.